Here is a 255-residue protein sequence, read N- to C-terminus: Pyrroloquinoline-quinone synthase (255 aa).

It belongs to the PqqC family.

It catalyses the reaction 6-(2-amino-2-carboxyethyl)-7,8-dioxo-1,2,3,4,7,8-hexahydroquinoline-2,4-dicarboxylate + 3 O2 = pyrroloquinoline quinone + 2 H2O2 + 2 H2O + H(+). The protein operates within cofactor biosynthesis; pyrroloquinoline quinone biosynthesis. In terms of biological role, ring cyclization and eight-electron oxidation of 3a-(2-amino-2-carboxyethyl)-4,5-dioxo-4,5,6,7,8,9-hexahydroquinoline-7,9-dicarboxylic-acid to PQQ. The polypeptide is Pyrroloquinoline-quinone synthase (Cereibacter sphaeroides (strain KD131 / KCTC 12085) (Rhodobacter sphaeroides)).